Here is a 244-residue protein sequence, read N- to C-terminus: uncharacterized protein (244 aa).

The GP-PDE domain maps to 5 to 244 (QLLLAHRGYS…ANKKFEIKIN (240 aa)).

This sequence to glycerophosphoryl diester phosphodiesterases (EC 3.1.4.46). The protein to M.genitalium MG385.

This is an uncharacterized protein from Mycoplasma genitalium (strain ATCC 33530 / DSM 19775 / NCTC 10195 / G37) (Mycoplasmoides genitalium).